We begin with the raw amino-acid sequence, 207 residues long: Large ribosomal subunit protein uL4 (207 aa).

Positions 45-78 (RQGTHAVKNRSARRGGGRKPWRQKGTGRARQGSI) are disordered. The segment covering 51 to 71 (VKNRSARRGGGRKPWRQKGTG) has biased composition (basic residues).

This sequence belongs to the universal ribosomal protein uL4 family. In terms of assembly, part of the 50S ribosomal subunit.

In terms of biological role, one of the primary rRNA binding proteins, this protein initially binds near the 5'-end of the 23S rRNA. It is important during the early stages of 50S assembly. It makes multiple contacts with different domains of the 23S rRNA in the assembled 50S subunit and ribosome. Forms part of the polypeptide exit tunnel. The sequence is that of Large ribosomal subunit protein uL4 from Lactiplantibacillus plantarum (strain ATCC BAA-793 / NCIMB 8826 / WCFS1) (Lactobacillus plantarum).